The primary structure comprises 425 residues: Serine--tRNA ligase (425 aa).

Residue 230 to 232 (TAE) participates in L-serine binding. 261-263 (RSE) provides a ligand contact to ATP. An L-serine-binding site is contributed by glutamate 284. Position 348–351 (348–351 (EISS)) interacts with ATP. Residue serine 384 participates in L-serine binding.

The protein belongs to the class-II aminoacyl-tRNA synthetase family. Type-1 seryl-tRNA synthetase subfamily. In terms of assembly, homodimer. The tRNA molecule binds across the dimer.

The protein resides in the cytoplasm. The catalysed reaction is tRNA(Ser) + L-serine + ATP = L-seryl-tRNA(Ser) + AMP + diphosphate + H(+). It catalyses the reaction tRNA(Sec) + L-serine + ATP = L-seryl-tRNA(Sec) + AMP + diphosphate + H(+). Its pathway is aminoacyl-tRNA biosynthesis; selenocysteinyl-tRNA(Sec) biosynthesis; L-seryl-tRNA(Sec) from L-serine and tRNA(Sec): step 1/1. Functionally, catalyzes the attachment of serine to tRNA(Ser). Is also able to aminoacylate tRNA(Sec) with serine, to form the misacylated tRNA L-seryl-tRNA(Sec), which will be further converted into selenocysteinyl-tRNA(Sec). The protein is Serine--tRNA ligase of Nitratidesulfovibrio vulgaris (strain DSM 19637 / Miyazaki F) (Desulfovibrio vulgaris).